We begin with the raw amino-acid sequence, 720 residues long: Receptor-like protein CLAVATA2 (720 aa).

A signal peptide spans 1 to 25 (MIKIADFTLFFFIFVFSPSLPLAQS). The interval 26 to 92 (QLPDLDPQDK…LNLSSQIHPS (67 aa)) is N-cap. Topologically, residues 26–686 (QLPDLDPQDK…QNELVEGPIS (661 aa)) are extracellular. N-linked (GlcNAc...) asparagine glycans are attached at residues N49, N62, N84, N108, N127, and N168. Residues C60 and C68 are joined by a disulfide bond. LRR repeat units lie at residues 96–122 (LSSLQSLDLSHNNFSGNIPSCFGSLRN), 124–144 (RTLNLSRNRFVGSIPATFVSL), 146–168 (ELREVVLSENRDLGGVVPHWFGN), 170–194 (SMNLERVDFSFCSFVGELPESLLYL), 195–217 (KSLKYLNLESNNMTGTLRDFQQP), 219–238 (VVLNLASNQFSGTLPCFYAS), 239–263 (RPSLSILNIAENSLVGGLPSCLGSL), 264–287 (KELSHLNLSFNGFNYEISPRLMFS), 288–311 (EKLVMLDLSHNGFSGRLPSRISET), 314–338 (KLGLVLLDLSHNSFSGDIPLRITEL), 339–362 (KSLQALRLSHNLLTGDIPARIGNL), 364–386 (YLQVIDLSHNALTGSIPLNIVGC), 388–410 (QLLALMISNNNLSGEIQPELDAL), 411–436 (DSLKILDISNNHISGEIPLTLAGLKS), 438–458 (EIVDISSNNLSGNLNEAITKW), 459–482 (SNLKYLSLARNKFSGTLPSWLFKF), 484–506 (KIQMIDYSSNRFSWFIPDDNLNS), 547–571 (LLSMVGIDLSDNLLHGEIPEALFRQ), 573–594 (NIEYLNLSYNFLEGQLPRLEKL), 595–617 (PRLKALDLSHNSLSGQVIGNISA), and 619–641 (PGLTLLNLSHNCFSGIITEKEGL). Residue N206 is glycosylated (N-linked (GlcNAc...) asparagine). A glycan (N-linked (GlcNAc...) asparagine) is linked at N270. N-linked (GlcNAc...) asparagine glycosylation occurs at N361. N-linked (GlcNAc...) asparagine glycosylation is present at N398. N-linked (GlcNAc...) asparagine glycosylation occurs at N446. N-linked (GlcNAc...) asparagine glycosylation is present at N505. N-linked (GlcNAc...) asparagine glycosylation is found at N578, N614, and N625. Positions 649 to 682 (AGNPELCVETPGSKCDPANIDASQEEIYQNELVE) are C-cap/acidic domain. Residues 687 to 707 (IWIFCLSAFISFDFGVLGIFC) form a helical membrane-spanning segment. Over 708 to 720 (SARARSYILQTKA) the chain is Cytoplasmic.

This sequence belongs to the RLP family. As to quaternary structure, parts of a tetrameric complex made of two CLV2/CRN heterodimers that can interact with CLV3 and CLE peptides. CLV2/CRN heterodimer interacts with CLV1 homodimers. Interacts with CRN; this dimer can interact with BAM3. Interacts with CLE14. As to expression, mostly expressed in apices (e.g. shoot apical meristem and flower buds), and, to a lower extent, in flowers, leaves, seedlings and siliques. Also expressed in the inner tissues of the proximal root meristem. Expressed throughout the vascular cylinder of root tips.

It is found in the cell membrane. The protein localises to the endoplasmic reticulum membrane. Its function is as follows. Involved in the perception of CLV3 and CLV3-like (CLE) peptides, that act as extracellular signals regulating meristems maintenance. Required for the sensing of the root CLE peptides (e.g. CLE8, CLE9/CLE10, CLE11, CLE13, CLE14, CLE16, CLE17, CLE18, CLE20, CLE21, CLE25, CLE26, CLE40, CLE41/CLE44 and CLE45), which also involves CRN and leads to root growth regulation, mostly in the phloem and protophloem. Involved in controlling the stem cell population size in shoot and root apical meristems, and during organ development. Promotes the formation of CLV1 multimers. In complex with CRN, perceives secreted CLV3-like effector proteins from plant-parasitic cyst nematodes as ligand mimics of the plant CLE signaling pathway. This recognition is required for proper feeding structure (syncytium) development and ultimately successful nematode infection. CLE14 perception by CLV2/CRN complex triggers root meristem differentiation. The polypeptide is Receptor-like protein CLAVATA2 (Arabidopsis thaliana (Mouse-ear cress)).